The primary structure comprises 261 residues: MLEALLLGVVEGLTEFLPISSTAHLMLIGDMLGFEGPPGKTYEIVVQLGAILAVCVVFRQRLWGVATTITQPRSFAFARNVMVAFLPAAVIGATLYKYIKQMLESPLVAAIALVVGGVAILVIERLVKRARIHDIEDMSPALALGVGFCQVLAMVPGVSRAGATIMGSMLLGLDRRAAAEFSFFLAIPTMCGASAYSLYKNWATLSFDGAGLIALGFVAAFLSALVVVKGFIGFVGRHGFAPFAWYRIAFGSLMAVLILMR.

A run of 8 helical transmembrane segments spans residues M1–S21, P38–F58, F75–L95, L103–I123, M138–V158, A178–L198, L212–I232, and F240–M260.

Belongs to the UppP family.

Its subcellular location is the cell inner membrane. It catalyses the reaction di-trans,octa-cis-undecaprenyl diphosphate + H2O = di-trans,octa-cis-undecaprenyl phosphate + phosphate + H(+). Functionally, catalyzes the dephosphorylation of undecaprenyl diphosphate (UPP). Confers resistance to bacitracin. In Paramagnetospirillum magneticum (strain ATCC 700264 / AMB-1) (Magnetospirillum magneticum), this protein is Undecaprenyl-diphosphatase 2.